We begin with the raw amino-acid sequence, 358 residues long: uncharacterized protein (358 aa).

Belongs to the serpin family. Poxviruses subfamily.

This is an uncharacterized protein from Fowlpox virus (strain NVSL) (FPV).